A 296-amino-acid chain; its full sequence is Phosphate transport system permease protein PstA (296 aa).

Residues 1–28 lie on the Cytoplasmic side of the membrane; sequence MAMVEMQTTAALAESRRKMQARRRLKNR. The helical transmembrane segment at 29–50 threads the bilayer; that stretch reads IALTLSMATMAFGLFWLIWILM. Over 51–82 the chain is Periplasmic; that stretch reads STITRGIDGMSLALFTEMTPPPNTEGGGLANA. Residues 83–102 traverse the membrane as a helical segment; it reads LAGSGLLILWATVFGTPLGI. The ABC transmembrane type-1 domain maps to 83–286; that stretch reads LAGSGLLILW…LCVLLLNILA (204 aa). Residues 103–126 lie on the Cytoplasmic side of the membrane; that stretch reads MAGIYLAEYGRKSWLAEVIRFIND. The chain crosses the membrane as a helical span at residues 127–146; that stretch reads ILLSAPSIVVGLFVYTIVVA. The Periplasmic segment spans residues 147–150; the sequence is QMEH. A helical membrane pass occupies residues 151 to 169; sequence FSGWAGVIALALLQVPIVI. Residues 170–204 lie on the Cytoplasmic side of the membrane; that stretch reads RTTENMLKLVPYSLREAAYALGTPKWKMISAITLK. The chain crosses the membrane as a helical span at residues 205-223; that stretch reads ASVSGIMTGILLAIARIAG. The Periplasmic portion of the chain corresponds to 224–266; sequence ETAPLLFTALSNQFWSTDMMQPIANLPVTIFKFAMSPFAEWQQ. The chain crosses the membrane as a helical span at residues 267-286; it reads LAWAGVLIITLCVLLLNILA. The Cytoplasmic portion of the chain corresponds to 287–296; the sequence is RVVFAKNKHG.

Belongs to the binding-protein-dependent transport system permease family. CysTW subfamily.

It is found in the cell inner membrane. Part of the binding-protein-dependent transport system for phosphate; probably responsible for the translocation of the substrate across the membrane. The polypeptide is Phosphate transport system permease protein PstA (pstA) (Escherichia coli (strain K12)).